The sequence spans 417 residues: MSRITSMLVTHKKASISEIENAWHGDVEALLKWVSSHDTVEECAVLKTCNRVEIYVVSPRGEKVLFEIAKKARVSSRIIDIHDHDESLLHLLRLASGLESMIIGEDQILGQMKELYRTAKSLGYTGWVLDTAFKKAIQVGKRVRKETAINERSVSVGSAAVDLAEQILGGLEGKSVLVIGAGETGELISKALVSKNIGSLYVTNRTFGTALSLAASLGGTAVPYEEMKRKIREADVVISATSAPHYILLKDDIERAMEGRKNKLLIIDIANPRDVDEAVREIEGVELHNIDSLKQISDENMRLRMREIERVEAIIEEELELLRAKYKRREAEELLARIYSEAEKIKEQEVRRAMNKLSAYHTLGEIEQKVLMDMSHSIVNKIFAEPTKALKSAAERGNTEMLRYAMELFRLNQEESD.

Residues 48–51 (TCNR), Ser100, 105–107 (EDQ), and Gln111 contribute to the substrate site. The active-site Nucleophile is Cys49. NADP(+) is bound at residue 180 to 185 (GAGETG).

It belongs to the glutamyl-tRNA reductase family. In terms of assembly, homodimer.

It carries out the reaction (S)-4-amino-5-oxopentanoate + tRNA(Glu) + NADP(+) = L-glutamyl-tRNA(Glu) + NADPH + H(+). It functions in the pathway porphyrin-containing compound metabolism; protoporphyrin-IX biosynthesis; 5-aminolevulinate from L-glutamyl-tRNA(Glu): step 1/2. Its function is as follows. Catalyzes the NADPH-dependent reduction of glutamyl-tRNA(Glu) to glutamate 1-semialdehyde (GSA). This chain is Glutamyl-tRNA reductase, found in Methanothrix thermoacetophila (strain DSM 6194 / JCM 14653 / NBRC 101360 / PT) (Methanosaeta thermophila).